Consider the following 465-residue polypeptide: Ribulose bisphosphate carboxylase large chain (465 aa).

Lys4 is subject to N6,N6,N6-trimethyllysine. Positions 113 and 163 each coordinate substrate. The active-site Proton acceptor is the Lys165. Lys167 contributes to the substrate binding site. Positions 191, 193, and 194 each coordinate Mg(2+). The residue at position 191 (Lys191) is an N6-carboxylysine. The Proton acceptor role is filled by His284. Residues Arg285, His317, and Ser369 each coordinate substrate.

It belongs to the RuBisCO large chain family. Type I subfamily. As to quaternary structure, heterohexadecamer of 8 large chains and 8 small chains; disulfide-linked. The disulfide link is formed within the large subunit homodimers. Mg(2+) serves as cofactor. In terms of processing, the disulfide bond which can form in the large chain dimeric partners within the hexadecamer appears to be associated with oxidative stress and protein turnover.

It is found in the plastid. It localises to the chloroplast. The catalysed reaction is 2 (2R)-3-phosphoglycerate + 2 H(+) = D-ribulose 1,5-bisphosphate + CO2 + H2O. It carries out the reaction D-ribulose 1,5-bisphosphate + O2 = 2-phosphoglycolate + (2R)-3-phosphoglycerate + 2 H(+). RuBisCO catalyzes two reactions: the carboxylation of D-ribulose 1,5-bisphosphate, the primary event in carbon dioxide fixation, as well as the oxidative fragmentation of the pentose substrate in the photorespiration process. Both reactions occur simultaneously and in competition at the same active site. This chain is Ribulose bisphosphate carboxylase large chain, found in Fragaria ananassa (Strawberry).